The chain runs to 351 residues: MRKIIHVDMDCFFAAVEMRDNPALRDIPIAIGGSRERRGVISTANYPARKFGVRSAMPTGMALKLCPHLTLLPGRFDAYKEASNHIREIFSRYTSRIEPLSLDEAYLDVTDSVHCHGSATLIAQEIRQTIFSELQLTASAGVTPVKFLAKIASDMNKPNGQFVITPAEVSAFLQTLPLAKIPGVGKVSAAKLEAMGLRTCGDVQKCDLVILLKRFGKFGRILWERSQGIDERDVNSERLRKSVGVERTMAEDIHHWSECEAIIERLYPELERRLAKVKPDLLIARQGVKLKFDDFQQTTQEHVWPRLNKADLIATARKTWDERRGGRGVRLVGLHVTLLDPQMERQLVLGL.

The UmuC domain occupies I4–G185. Residues D8 and D103 each coordinate Mg(2+). E104 is a catalytic residue.

Belongs to the DNA polymerase type-Y family. In terms of assembly, monomer. Mg(2+) is required as a cofactor.

Its subcellular location is the cytoplasm. The enzyme catalyses DNA(n) + a 2'-deoxyribonucleoside 5'-triphosphate = DNA(n+1) + diphosphate. Poorly processive, error-prone DNA polymerase involved in untargeted mutagenesis. Copies undamaged DNA at stalled replication forks, which arise in vivo from mismatched or misaligned primer ends. These misaligned primers can be extended by PolIV. Exhibits no 3'-5' exonuclease (proofreading) activity. May be involved in translesional synthesis, in conjunction with the beta clamp from PolIII. The sequence is that of DNA polymerase IV from Escherichia coli O157:H7.